Consider the following 172-residue polypeptide: Putative acetyltransferase YvoF (172 aa).

The protein belongs to the transferase hexapeptide repeat family.

This Bacillus subtilis (strain 168) protein is Putative acetyltransferase YvoF (yvoF).